Consider the following 443-residue polypeptide: Toxin YjjJ (443 aa).

The active-site Proton acceptor is Asp342.

It belongs to the HipA Ser/Thr kinase family.

Its function is as follows. Toxic when overexpressed in E.coli, leading to long filamentous cells. The toxic effect is neutralized by non-cognate antitoxin HipB. Does not seem to inhibit DNA, RNA or protein synthesis, and unlike paralogous toxin HipA its toxic activity is not counteracted by overexpression of GltX. Binds DNA. Might be a protein kinase. This is Toxin YjjJ (yjjJ) from Escherichia coli (strain K12).